Reading from the N-terminus, the 224-residue chain is BTB/POZ domain-containing protein At5g48510 (224 aa).

The 75-residue stretch at valine 24 to alanine 98 folds into the BTB domain.

Interacts with CUL3A.

The protein operates within protein modification; protein ubiquitination. Functionally, may act as a substrate-specific adapter of an E3 ubiquitin-protein ligase complex (CUL3-RBX1-BTB) which mediates the ubiquitination and subsequent proteasomal degradation of target proteins. The chain is BTB/POZ domain-containing protein At5g48510 from Arabidopsis thaliana (Mouse-ear cress).